Here is a 227-residue protein sequence, read N- to C-terminus: uncharacterized protein (227 aa).

2 consecutive transmembrane segments (helical) span residues 7–24 (FVYA…VTWA) and 135–157 (VVVI…LMCL).

This sequence belongs to the TMEM9 family.

The protein localises to the membrane. This is an uncharacterized protein from Drosophila melanogaster (Fruit fly).